We begin with the raw amino-acid sequence, 295 residues long: Ribosomal RNA small subunit methyltransferase A (295 aa).

Residues Asn-31, Leu-33, Gly-58, Glu-79, Asp-104, and Asn-129 each contribute to the S-adenosyl-L-methionine site.

The protein belongs to the class I-like SAM-binding methyltransferase superfamily. rRNA adenine N(6)-methyltransferase family. RsmA subfamily.

The protein resides in the cytoplasm. The enzyme catalyses adenosine(1518)/adenosine(1519) in 16S rRNA + 4 S-adenosyl-L-methionine = N(6)-dimethyladenosine(1518)/N(6)-dimethyladenosine(1519) in 16S rRNA + 4 S-adenosyl-L-homocysteine + 4 H(+). In terms of biological role, specifically dimethylates two adjacent adenosines (A1518 and A1519) in the loop of a conserved hairpin near the 3'-end of 16S rRNA in the 30S particle. May play a critical role in biogenesis of 30S subunits. This is Ribosomal RNA small subunit methyltransferase A from Enterococcus faecalis (strain ATCC 700802 / V583).